A 196-amino-acid chain; its full sequence is uncharacterized protein (196 aa).

It to E.coli YjaG.

This is an uncharacterized protein from Haemophilus influenzae (strain ATCC 51907 / DSM 11121 / KW20 / Rd).